The following is a 214-amino-acid chain: MRVRYKPWAKDYLKDHPELVDMDGQHAGKMTEWFDKTQPIHIEIGSGMGQFITTLAAQNPHINYISMEREKSIVYKVLDKVKEMGLTNLKIICNDAIELNEYFKDGEVSRIYLNFSDPWPKNRHAKRRLTYHTFLALYQQILNDEGDLHFKTDNRGLFAYSLESMSQFGMYFTKINLNLHQEDDGSNILTEYEKKFSDKGSRIYRMEAKFHSQK.

Positions 43, 68, 95, and 117 each coordinate S-adenosyl-L-methionine. Asp117 is an active-site residue. Substrate is bound by residues Lys121, Asp153, and 190 to 193; that span reads TEYE.

The protein belongs to the class I-like SAM-binding methyltransferase superfamily. TrmB family.

The enzyme catalyses guanosine(46) in tRNA + S-adenosyl-L-methionine = N(7)-methylguanosine(46) in tRNA + S-adenosyl-L-homocysteine. It participates in tRNA modification; N(7)-methylguanine-tRNA biosynthesis. Functionally, catalyzes the formation of N(7)-methylguanine at position 46 (m7G46) in tRNA. The sequence is that of tRNA (guanine-N(7)-)-methyltransferase from Staphylococcus aureus (strain COL).